Consider the following 193-residue polypeptide: MRLLEERILAEGTVLGETILKVDQFLTHQVDYRLMKEIGRVFADQYADLGITKVVTIEASGIAPAVYTAEALEVPMIFAKKHKNITMTEGILTAEVYSFTKQVTSTVSIAGGLLSKEDRVLIIDDFLANGQAAKGLIDIIQQAGAKAVGIGIVIEKSFQAGRQLLEDLGVEVTSLARIKHFDNGTVSFLEADA.

Xanthine-binding residues include L20 and T27. A128 to A132 is a 5-phospho-alpha-D-ribose 1-diphosphate binding site. Xanthine is bound at residue K156.

It belongs to the purine/pyrimidine phosphoribosyltransferase family. Xpt subfamily. In terms of assembly, homodimer.

The protein localises to the cytoplasm. It carries out the reaction XMP + diphosphate = xanthine + 5-phospho-alpha-D-ribose 1-diphosphate. Its pathway is purine metabolism; XMP biosynthesis via salvage pathway; XMP from xanthine: step 1/1. Its function is as follows. Converts the preformed base xanthine, a product of nucleic acid breakdown, to xanthosine 5'-monophosphate (XMP), so it can be reused for RNA or DNA synthesis. In Streptococcus equi subsp. zooepidemicus (strain H70), this protein is Xanthine phosphoribosyltransferase.